The primary structure comprises 512 residues: Opioid growth factor receptor-like protein 1 (512 aa).

Disordered stretches follow at residues 1–72 (MGNI…ETGT), 323–469 (IWGP…TCCK), and 488–512 (SLSP…GPFT). 2 stretches are compositionally biased toward acidic residues: residues 28–54 (GGEE…DNEE) and 62–71 (TNEGGEEETG). Residues 328-337 (DKQKADENKA) are compositionally biased toward basic and acidic residues. Residues 347–361 (QKKHSHVEKKSRPAK) show a composition bias toward basic residues. The span at 408 to 421 (TVTSENNSSKTGQT) shows a compositional bias: polar residues. A compositionally biased stretch (basic and acidic residues) spans 449–468 (RSLDTEHDLKRPEADRETCC). Residues 490–499 (SPGTSNSNVT) show a composition bias toward polar residues.

It belongs to the opioid growth factor receptor family.

This is Opioid growth factor receptor-like protein 1 (ogfrl1) from Xenopus tropicalis (Western clawed frog).